Consider the following 452-residue polypeptide: Phosphoglucosamine mutase (452 aa).

S101 functions as the Phosphoserine intermediate in the catalytic mechanism. Positions 101, 241, 243, and 245 each coordinate Mg(2+). S101 is subject to Phosphoserine.

It belongs to the phosphohexose mutase family. The cofactor is Mg(2+). Post-translationally, activated by phosphorylation.

It catalyses the reaction alpha-D-glucosamine 1-phosphate = D-glucosamine 6-phosphate. Functionally, catalyzes the conversion of glucosamine-6-phosphate to glucosamine-1-phosphate. The protein is Phosphoglucosamine mutase of Lactococcus lactis subsp. cremoris (strain MG1363).